Here is a 458-residue protein sequence, read N- to C-terminus: DNA repair protein RadA (458 aa).

The C4-type zinc-finger motif lies at 10-27; sequence CQSCGYESPKWMGKCPGC. 98-105 is an ATP binding site; sequence GDPGIGKS. The short motif at 255–259 is the RadA KNRFG motif element; the sequence is KNRFG. Residues 354–458 form a lon-protease-like region; that stretch reads DAYLKVAGGV…AEALRTSLGG (105 aa).

It belongs to the RecA family. RadA subfamily. Interacts with DisA.

DNA-dependent ATPase involved in processing of recombination intermediates, plays a role in repairing DNA breaks. Stimulates the branch migration of RecA-mediated strand transfer reactions, allowing the 3' invading strand to extend heteroduplex DNA faster. Binds ssDNA in the presence of ADP but not other nucleotides, has ATPase activity that is stimulated by ssDNA and various branched DNA structures, but inhibited by SSB. Does not have RecA's homology-searching function. Its function is as follows. Plays a role in DNA repair. Might stabilize or process Holliday junction intermediates. May work with DisA following methyl methanesulfonate (MMS) but not H(2)O(2) damage; DisA is a DNA integrity scanning protein with c-di-AMP synthase activity. This Bacillus subtilis (strain 168) protein is DNA repair protein RadA.